Reading from the N-terminus, the 115-residue chain is Virion-associated protein (115 aa).

2 coiled-coil regions span residues Met-1–Arg-28 and Lys-33–Gln-54. Polar residues predominate over residues Gly-96–Pro-106. The disordered stretch occupies residues Gly-96–Lys-115.

Belongs to the caulimovirus ORF III family. As to quaternary structure, homotetramer, through coiled-coil domain. Homotrimer when interacts with icosehadral capsid. Interacts with capsid protein, and with Movement protein.

The protein localises to the virion. The protein resides in the host cell junction. It is found in the host plasmodesma. Its function is as follows. Plays a role in virus cell-to-cell and plant-to-plant transmission. Interacts with virion icosahedral capsid and movement protein, thereby facilitating virion cell-to-cell transmission through plasmodesmata opened by viral movement protein. Also interacts with aphid transmission factor, attaching the virion to aphid stylet when the animal feeds on an virus infected plant. Aphid saliva may later detach the virion, inducing release of infectious particles when the animal feeds on a new plant. The sequence is that of Virion-associated protein from Scrophularia californica (California bee plant).